An 86-amino-acid polypeptide reads, in one-letter code: MIRFILFISCFFLIGMVIECKDGYLMEPNGCKRGCLTRPARYCPNECSRLKGKDGYCYLWLACYCYNMPESAPVWERATNRCGKGK.

The N-terminal stretch at 1-20 (MIRFILFISCFFLIGMVIEC) is a signal peptide. Residues 21-83 (KDGYLMEPNG…VWERATNRCG (63 aa)) form the LCN-type CS-alpha/beta domain. 4 disulfide bridges follow: Cys-31/Cys-82, Cys-35/Cys-57, Cys-43/Cys-63, and Cys-47/Cys-65. Lys-84 bears the Lysine amide mark.

Expressed by the venom gland.

It localises to the secreted. Its function is as follows. Beta toxins bind voltage-independently at site-4 of sodium channels (Nav) and shift the voltage of activation toward more negative potentials thereby affecting sodium channel activation and promoting spontaneous and repetitive firing. The sequence is that of Toxin Td1 from Tityus discrepans (Venezuelan scorpion).